The sequence spans 384 residues: 23S rRNA (uracil(747)-C(5))-methyltransferase RlmC (384 aa).

[4Fe-4S] cluster contacts are provided by Cys-7, Cys-15, Cys-18, and Cys-94. S-adenosyl-L-methionine contacts are provided by Gln-219, Phe-248, Glu-269, and Asn-316. Cys-343 acts as the Nucleophile in catalysis.

Belongs to the class I-like SAM-binding methyltransferase superfamily. RNA M5U methyltransferase family. RlmC subfamily.

The catalysed reaction is uridine(747) in 23S rRNA + S-adenosyl-L-methionine = 5-methyluridine(747) in 23S rRNA + S-adenosyl-L-homocysteine + H(+). Functionally, catalyzes the formation of 5-methyl-uridine at position 747 (m5U747) in 23S rRNA. This Shewanella sp. (strain ANA-3) protein is 23S rRNA (uracil(747)-C(5))-methyltransferase RlmC.